Reading from the N-terminus, the 471-residue chain is UDP-N-acetylmuramate--L-alanine ligase (471 aa).

125 to 131 contacts ATP; it reads GTHGKTT.

This sequence belongs to the MurCDEF family.

The protein localises to the cytoplasm. The catalysed reaction is UDP-N-acetyl-alpha-D-muramate + L-alanine + ATP = UDP-N-acetyl-alpha-D-muramoyl-L-alanine + ADP + phosphate + H(+). It functions in the pathway cell wall biogenesis; peptidoglycan biosynthesis. Its function is as follows. Cell wall formation. The chain is UDP-N-acetylmuramate--L-alanine ligase from Kineococcus radiotolerans (strain ATCC BAA-149 / DSM 14245 / SRS30216).